We begin with the raw amino-acid sequence, 335 residues long: Ferrochelatase (335 aa).

Histidine 211 and glutamate 290 together coordinate Fe cation.

Belongs to the ferrochelatase family.

It is found in the cytoplasm. It carries out the reaction heme b + 2 H(+) = protoporphyrin IX + Fe(2+). Its pathway is porphyrin-containing compound metabolism; protoheme biosynthesis; protoheme from protoporphyrin-IX: step 1/1. Functionally, catalyzes the ferrous insertion into protoporphyrin IX. The protein is Ferrochelatase of Sulfurihydrogenibium sp. (strain YO3AOP1).